The following is a 119-amino-acid chain: Large ribosomal subunit protein bL20 (119 aa).

Belongs to the bacterial ribosomal protein bL20 family.

Binds directly to 23S ribosomal RNA and is necessary for the in vitro assembly process of the 50S ribosomal subunit. It is not involved in the protein synthesizing functions of that subunit. This chain is Large ribosomal subunit protein bL20, found in Granulibacter bethesdensis (strain ATCC BAA-1260 / CGDNIH1).